Here is a 2462-residue protein sequence, read N- to C-terminus: Non-reducing polyketide synthase ausA (2462 aa).

An N-terminal acylcarrier protein transacylase domain (SAT) region spans residues 16–253 (VFFGPVYPEL…HTADHIPAMK (238 aa)). One can recognise a Ketosynthase family 3 (KS3) domain in the interval 385–801 (SAPIAVTGFA…GSNAVIVVKE (417 aa)). Residues cysteine 550, histidine 685, and histidine 724 each act as for beta-ketoacyl synthase activity in the active site. Residues 904–1208 (LCFGGQTGDT…LPIDLQESTA (305 aa)) form a malonyl-CoA:ACP transacylase (MAT) domain region. The For acyl/malonyl transferase activity role is filled by serine 991. Positions 1274–1403 (HDDGLLQLVE…GKVLLDPQAA (130 aa)) are N-terminal hotdog fold. One can recognise a PKS/mFAS DH domain in the interval 1274–1581 (HDDGLLQLVE…FTSVSIQSLK (308 aa)). The product template (PT) domain stretch occupies residues 1277–1580 (GLLQLVERDA…TFTSVSIQSL (304 aa)). Histidine 1307 (proton acceptor; for dehydratase activity) is an active-site residue. The C-terminal hotdog fold stretch occupies residues 1431 to 1581 (SSNGLKRATV…FTSVSIQSLK (151 aa)). Aspartate 1489 functions as the Proton donor; for dehydratase activity in the catalytic mechanism. A Carrier domain is found at 1613–1690 (VSDDHHLRAV…GLAHRISPSS (78 aa)). O-(pantetheine 4'-phosphoryl)serine is present on serine 1650. Residues 1850 to 2083 (QHASEHKLLR…GFNWVDWTDN (234 aa)) form a methyltransferase (CMeT) domain region. A thioesterase (TE) domain region spans residues 2112–2462 (TPARVETVRY…YEFLRQHVAV (351 aa)). Residues serine 2235, aspartate 2398, and histidine 2430 each act as for thioesterase activity in the active site.

The catalysed reaction is 3 malonyl-CoA + acetyl-CoA + 2 S-adenosyl-L-methionine = 3,5-dimethylorsellinate + 2 S-adenosyl-L-homocysteine + 3 CO2 + 4 CoA. It participates in secondary metabolite biosynthesis; terpenoid biosynthesis. Non-reducing polyketide synthase; part of the gene cluster that mediates the biosynthesis of calidodehydroaustin, a fungal meroterpenoid. The first step of the pathway is the synthesis of 3,5-dimethylorsellinic acid by the polyketide synthase ausA. 3,5-dimethylorsellinic acid is then prenylated by the polyprenyl transferase ausN. Further epoxidation by the FAD-dependent monooxygenase ausM and cyclization by the probable terpene cyclase ausL lead to the formation of protoaustinoid A. Protoaustinoid A is then oxidized to spiro-lactone preaustinoid A3 by the combined action of the FAD-binding monooxygenases ausB and ausC, and the dioxygenase ausE. Acid-catalyzed keto-rearrangement and ring contraction of the tetraketide portion of preaustinoid A3 by ausJ lead to the formation of preaustinoid A4. The aldo-keto reductase ausK, with the help of ausH, is involved in the next step by transforming preaustinoid A4 into isoaustinone which is in turn hydroxylated by the P450 monooxygenase ausI to form austinolide. The cytochrome P450 monooxygenase ausG modifies austinolide to austinol. Austinol is further acetylated to austin by the O-acetyltransferase ausP, which spontaneously changes to dehydroaustin. The cytochrome P450 monooxygenase ausR then converts dehydroaustin is into 7-dehydrodehydroaustin. The hydroxylation catalyzed by ausR permits the O-acetyltransferase ausQ to add an additional acetyl group to the molecule, leading to the formation of acetoxydehydroaustin. The short chain dehydrogenase ausT catalyzes the reduction of the double bond present between carbon atoms 1 and 2 to convert 7-dehydrodehydroaustin into 1,2-dihydro-7-hydroxydehydroaustin. AusQ catalyzes not only an acetylation reaction but also the addition of the PKS ausV diketide product to 1,2-dihydro-7-hydroxydehydroaustin, forming precalidodehydroaustin. Finally, the iron/alpha-ketoglutarate-dependent dioxygenase converts precalidodehydroaustin into calidodehydroaustin. The polypeptide is Non-reducing polyketide synthase ausA (Aspergillus calidoustus).